The primary structure comprises 1488 residues: Indigoidine synthase (1488 aa).

An adenylation region spans residues Lys229–Leu585. Residues Ala1137–Arg1212 enclose the Carrier domain. Ser1172 is modified (O-(pantetheine 4'-phosphoryl)serine). The segment at Pro1230–Ala1346 is thioesterase.

The protein belongs to the ATP-dependent AMP-binding enzyme family. The cofactor is pantetheine 4'-phosphate.

The catalysed reaction is 2 FMN + 2 L-glutamine + 2 ATP + O2 = indigoidine + 2 FMNH2 + 2 AMP + 2 diphosphate + 2 H2O. It carries out the reaction FMN + L-glutamine + ATP = 3-amino-1,5-dihydropyridine-2,6-dione + FMNH2 + AMP + diphosphate. The enzyme catalyses 2 3-amino-1,5-dihydropyridine-2,6-dione + O2 = indigoidine + 2 H2O. It functions in the pathway pigment biosynthesis. Its function is as follows. Nonribosomal peptide synthetase involved in the biosynthesis of the blue pigment indigoidine, which is implicated in pathogenicity and protection from oxidative stress. Catalyzes the synthesis of the blue pigment using L-Gln as a substrate. Two glutamine molecules are cyclized and oxidized to form indigoidine. This is Indigoidine synthase from Dickeya dadantii (strain 3937) (Erwinia chrysanthemi (strain 3937)).